The sequence spans 650 residues: Acetyl-coenzyme A synthetase (650 aa).

Residues 191–194 (RGGR), threonine 311, and asparagine 335 contribute to the CoA site. Residues 387–389 (GEP), 411–416 (DTWWQT), aspartate 500, and arginine 515 each bind ATP. Serine 523 is a binding site for CoA. Arginine 526 contributes to the ATP binding site. The Mg(2+) site is built by valine 537, histidine 539, and valine 542. CoA is bound at residue arginine 584. Lysine 609 is modified (N6-acetyllysine).

This sequence belongs to the ATP-dependent AMP-binding enzyme family. Mg(2+) serves as cofactor. Post-translationally, acetylated. Deacetylation by the SIR2-homolog deacetylase activates the enzyme.

It carries out the reaction acetate + ATP + CoA = acetyl-CoA + AMP + diphosphate. Functionally, catalyzes the conversion of acetate into acetyl-CoA (AcCoA), an essential intermediate at the junction of anabolic and catabolic pathways. AcsA undergoes a two-step reaction. In the first half reaction, AcsA combines acetate with ATP to form acetyl-adenylate (AcAMP) intermediate. In the second half reaction, it can then transfer the acetyl group from AcAMP to the sulfhydryl group of CoA, forming the product AcCoA. The chain is Acetyl-coenzyme A synthetase from Shewanella sp. (strain W3-18-1).